The primary structure comprises 89 residues: MSITAERKEALIKEYARVEGDTGSPEVQVAILTERIVNLTEHFKTHAKDNHSRRGLLRLVNKRRSLLDYVKNNDKDRYSSLIARLGLRK.

The protein belongs to the universal ribosomal protein uS15 family. Part of the 30S ribosomal subunit. Forms a bridge to the 50S subunit in the 70S ribosome, contacting the 23S rRNA.

One of the primary rRNA binding proteins, it binds directly to 16S rRNA where it helps nucleate assembly of the platform of the 30S subunit by binding and bridging several RNA helices of the 16S rRNA. In terms of biological role, forms an intersubunit bridge (bridge B4) with the 23S rRNA of the 50S subunit in the ribosome. The polypeptide is Small ribosomal subunit protein uS15 (Zymomonas mobilis subsp. mobilis (strain ATCC 31821 / ZM4 / CP4)).